A 150-amino-acid chain; its full sequence is Globin-2 A chain (150 aa).

Residue Val-2 is modified to Blocked amino end (Val). In terms of domain architecture, Globin spans 10–150 (CGSEAIKANL…ALVGVVQAAL (141 aa)). His-102 is a binding site for heme b.

This sequence belongs to the globin family. Heterotetramer of two alpha chains and two beta chains.

The sequence is that of Globin-2 A chain from Anadara inaequivalvis (Inequivalve ark).